An 82-amino-acid chain; its full sequence is Defensin-like protein 275 (82 aa).

The signal sequence occupies residues 1–23 (MALSKFQLVALLITYTLLFSCQS). Intrachain disulfides connect C36–C78, C42–C65, C48–C76, and C52–C77.

It belongs to the DEFL family.

It is found in the secreted. This Arabidopsis thaliana (Mouse-ear cress) protein is Defensin-like protein 275.